The following is a 456-amino-acid chain: UDP-N-acetylglucosamine 1-carboxyvinyltransferase (456 aa).

Position 34 to 35 (34 to 35 (KN)) interacts with phosphoenolpyruvate. A UDP-N-acetyl-alpha-D-glucosamine-binding site is contributed by R104. C128 (proton donor) is an active-site residue. Position 128 is a 2-(S-cysteinyl)pyruvic acid O-phosphothioketal (C128). UDP-N-acetyl-alpha-D-glucosamine contacts are provided by D319 and I341.

The protein belongs to the EPSP synthase family. MurA subfamily.

It localises to the cytoplasm. It catalyses the reaction phosphoenolpyruvate + UDP-N-acetyl-alpha-D-glucosamine = UDP-N-acetyl-3-O-(1-carboxyvinyl)-alpha-D-glucosamine + phosphate. The protein operates within cell wall biogenesis; peptidoglycan biosynthesis. Functionally, cell wall formation. Adds enolpyruvyl to UDP-N-acetylglucosamine. The chain is UDP-N-acetylglucosamine 1-carboxyvinyltransferase from Prochlorococcus marinus (strain MIT 9301).